Consider the following 376-residue polypeptide: Chaperone protein DnaJ (376 aa).

A J domain is found at 5–70 (DYYEILGVSK…QKRAAYDQYG (66 aa)). A CR-type zinc finger spans residues 131–209 (GVTKEIRIPT…CHGHGRVERS (79 aa)). 8 residues coordinate Zn(2+): Cys-144, Cys-147, Cys-161, Cys-164, Cys-183, Cys-186, Cys-197, and Cys-200. CXXCXGXG motif repeat units lie at residues 144-151 (CDVCHGSG), 161-168 (CPTCHGSG), 183-190 (CPHCQGRG), and 197-204 (CNKCHGHG).

It belongs to the DnaJ family. In terms of assembly, homodimer. Zn(2+) serves as cofactor.

Its subcellular location is the cytoplasm. Its function is as follows. Participates actively in the response to hyperosmotic and heat shock by preventing the aggregation of stress-denatured proteins and by disaggregating proteins, also in an autonomous, DnaK-independent fashion. Unfolded proteins bind initially to DnaJ; upon interaction with the DnaJ-bound protein, DnaK hydrolyzes its bound ATP, resulting in the formation of a stable complex. GrpE releases ADP from DnaK; ATP binding to DnaK triggers the release of the substrate protein, thus completing the reaction cycle. Several rounds of ATP-dependent interactions between DnaJ, DnaK and GrpE are required for fully efficient folding. Also involved, together with DnaK and GrpE, in the DNA replication of plasmids through activation of initiation proteins. This Escherichia coli O157:H7 (strain EC4115 / EHEC) protein is Chaperone protein DnaJ.